The sequence spans 532 residues: Apoptosis-inducing factor 1, mitochondrial (532 aa).

A mitochondrion-targeting transit peptide spans 1 to 26 (MIRNLTKLTKFTIGNRFYQSSSKGRF). Positions 63 to 84 (STPSIDVKEKKSQPPKTKEDYQ) are disordered. An FAD-dependent oxidoreductase region spans residues 98 to 440 (YVIIGGGTAA…APYTYQPFFW (343 aa)). Residues 102 to 106 (GGGTA), 128 to 129 (KE), R136, and K141 each bind FAD. Residue W160 coordinates NAD(+). Residues V188 and R236 each coordinate FAD. Residues 260–263 (GGFL), E288, and G353 contribute to the NAD(+) site. D392 is an FAD binding site. The Nuclear localization signal motif lies at 400–406 (SLGVRRR). NAD(+) contacts are provided by residues 408-409 (EH), W440, and E450. FAD contacts are provided by residues 409–410 (HH) and W440.

It belongs to the FAD-dependent oxidoreductase family. Requires FAD as cofactor.

Its subcellular location is the mitochondrion. It is found in the cytoplasm. It localises to the nucleus. The enzyme catalyses A + NADH + H(+) = AH2 + NAD(+). Probable NADH oxidoreductase that acts as a caspase-independent mitochondrial effector of apoptotic cell death. In Dictyostelium discoideum (Social amoeba), this protein is Apoptosis-inducing factor 1, mitochondrial (aif).